Here is a 314-residue protein sequence, read N- to C-terminus: DNA-directed RNA polymerase subunit alpha (314 aa).

Residues 1-228 (MIEFEKPNIH…EHLAMFVDLT (228 aa)) are alpha N-terminal domain (alpha-NTD). Positions 245 to 314 (KEKMLEMTIE…DLGVSFRQDD (70 aa)) are alpha C-terminal domain (alpha-CTD).

Belongs to the RNA polymerase alpha chain family. As to quaternary structure, homodimer. The RNAP catalytic core consists of 2 alpha, 1 beta, 1 beta' and 1 omega subunit. When a sigma factor is associated with the core the holoenzyme is formed, which can initiate transcription.

It carries out the reaction RNA(n) + a ribonucleoside 5'-triphosphate = RNA(n+1) + diphosphate. Functionally, DNA-dependent RNA polymerase catalyzes the transcription of DNA into RNA using the four ribonucleoside triphosphates as substrates. This chain is DNA-directed RNA polymerase subunit alpha, found in Limosilactobacillus reuteri (strain DSM 20016) (Lactobacillus reuteri).